Reading from the N-terminus, the 479-residue chain is Cardiolipin synthase A (479 aa).

The next 2 helical transmembrane spans lie at 8–28 (FFGYLIGLIHLLGIIAALHAV) and 38–58 (IAWALSLLFIPYFTLIPYLIF). PLD phosphodiesterase domains lie at 218–245 (VNFRNHRKIVVVDGLRGFLGGHNVGDEY) and 392–419 (QPGFLHQKVVLVDDEVSAIGSANLDNRS). Residues His-223, Lys-225, Asp-230, His-397, Lys-399, and Asp-404 contribute to the active site.

The protein belongs to the phospholipase D family. Cardiolipin synthase subfamily. ClsA sub-subfamily.

It is found in the cell inner membrane. The catalysed reaction is 2 a 1,2-diacyl-sn-glycero-3-phospho-(1'-sn-glycerol) = a cardiolipin + glycerol. Catalyzes the reversible phosphatidyl group transfer from one phosphatidylglycerol molecule to another to form cardiolipin (CL) (diphosphatidylglycerol) and glycerol. This Pseudomonas entomophila (strain L48) protein is Cardiolipin synthase A.